Consider the following 382-residue polypeptide: Rubredoxin-NAD(+) reductase (382 aa).

FAD contacts are provided by residues 9-12, 33-34, K42, V80, E156, D275, V287, and K318; these read TGLA and TA.

The protein belongs to the FAD-dependent oxidoreductase family. As to quaternary structure, homodimer. Requires FAD as cofactor.

Its subcellular location is the cytoplasm. The catalysed reaction is 2 reduced [rubredoxin] + NAD(+) + H(+) = 2 oxidized [rubredoxin] + NADH. Its pathway is hydrocarbon metabolism; alkane degradation. In terms of biological role, involved in the hydrocarbon hydroxylating system, which transfers electrons from NADH to rubredoxin reductase and then through rubredoxin to alkane 1 monooxygenase. The polypeptide is Rubredoxin-NAD(+) reductase (rubB) (Alcanivorax borkumensis (strain ATCC 700651 / DSM 11573 / NCIMB 13689 / SK2)).